The chain runs to 829 residues: MRRSFYASSTENTPMMMTQARVLSTGTTDNGTIRYDEVDETKRWFNRRFCFLTVIGIAVLLLAMVVIVVIVLLLTQLKAANSNAQNAMSSSKVQLEELTRKLSQPLEQLGPTLERLSNMPGFPMGPSPTTQTPPGVPPISPIVTGPNTTPESPRRSPKARYEWKGCQNLGKCELSGYTKPPLVILSLDGFAREYVDRNIVQTLNHIADCGVKADKVYPSYPSKTFPNHYSIVTGLWPESHGITDNSVFDPTISPVLESMKSTKYEKFFEGEPIWSVYKRKTGKKANCLFWVGCAYNNSGYAPDVAPAYNQELPFRNRIDTVVEWLKLPVDERPGLITAYLHEPDNAGHYQVDEEDVDEKLAEIDENLDYLMSRLSEEKLLECINFAILSDHGMQLIDKTYYFQDYLDLKGLITAKGVVGRVYINDTTISVNDVVDKFRCKIDTVKTNTRSDVPTRKHYSRDPRVGEVLLEGRAGVTFYKSKADDYELSGDHGYDYFNPKMHTIFYARGPSFKQNTTISPYQNIQYMNLWMNLLGIEGAVETNGTIGFFDNILTNPPRRDNPTNVIGECPMIAFPSVLKCSGNVSAETLNQLSVKLTNCAFSPTNIPLYSDNHCFQNYCDNSVIVSRKGNDARRAIIEVLSRDEASNPSNFTFLNAKYQSNCPSHIPTGSLTIRQNSQLSSMVDERIDVPNNFLLKVLDPLQAKSMEYLNKFGKMYVISGTATDINHDGIADSNGSVITHIYRIMLICNSTWLLMNPPLCTDSDSMDTLSFIFPITEQSTIDCMSSDDILLDYTATIFDVERISGFQFGIGALSQNQNTIIRRKISTKLW.

Residues 54 to 74 (VIGIAVLLLAMVVIVVIVLLL) form a helical; Signal-anchor for type II membrane protein membrane-spanning segment. Thr-224 functions as the Nucleophile in the catalytic mechanism. Residues Asn-296, Asn-424, Asn-514, Asn-542, Asn-582, Asn-649, Asn-733, and Asn-748 are each glycosylated (N-linked (GlcNAc...) asparagine). A disulfide bridge links Cys-439 with Cys-782.

This sequence belongs to the nucleotide pyrophosphatase/phosphodiesterase family.

It localises to the membrane. Its function is as follows. Probable phosphodiesterase. This chain is Ectonucleotide pyrophosphatase/phosphodiesterase C27A7.1, found in Caenorhabditis elegans.